The chain runs to 443 residues: UPF0656 protein C926.02 (443 aa).

It belongs to the UPF0656 family.

Its subcellular location is the cytoplasm. The protein localises to the nucleus. This chain is UPF0656 protein C926.02, found in Schizosaccharomyces pombe (strain 972 / ATCC 24843) (Fission yeast).